A 252-amino-acid polypeptide reads, in one-letter code: Octanoyltransferase (252 aa).

The segment covering Met1 to Ala21 has biased composition (low complexity). The disordered stretch occupies residues Met1–Pro22. The BPL/LPL catalytic domain maps to Pro56–Thr237. Substrate-binding positions include Arg96–His103, Ala168–Gly170, and Gly181–Ser183. The Acyl-thioester intermediate role is filled by Cys199.

It belongs to the LipB family.

Its subcellular location is the cytoplasm. The enzyme catalyses octanoyl-[ACP] + L-lysyl-[protein] = N(6)-octanoyl-L-lysyl-[protein] + holo-[ACP] + H(+). It functions in the pathway protein modification; protein lipoylation via endogenous pathway; protein N(6)-(lipoyl)lysine from octanoyl-[acyl-carrier-protein]: step 1/2. Catalyzes the transfer of endogenously produced octanoic acid from octanoyl-acyl-carrier-protein onto the lipoyl domains of lipoate-dependent enzymes. Lipoyl-ACP can also act as a substrate although octanoyl-ACP is likely to be the physiological substrate. The polypeptide is Octanoyltransferase (Burkholderia pseudomallei (strain 668)).